We begin with the raw amino-acid sequence, 400 residues long: tRNA-specific 2-thiouridylase MnmA (400 aa).

ATP-binding positions include 19-26 and Leu45; that span reads AMSGGVDS. Catalysis depends on Cys113, which acts as the Nucleophile. A disulfide bridge links Cys113 with Cys210. Position 137 (Gly137) interacts with ATP. Positions 160 to 162 are interaction with tRNA; sequence RDQ. Cys210 functions as the Cysteine persulfide intermediate in the catalytic mechanism.

Belongs to the MnmA/TRMU family.

The protein resides in the cytoplasm. The catalysed reaction is S-sulfanyl-L-cysteinyl-[protein] + uridine(34) in tRNA + AH2 + ATP = 2-thiouridine(34) in tRNA + L-cysteinyl-[protein] + A + AMP + diphosphate + H(+). Functionally, catalyzes the 2-thiolation of uridine at the wobble position (U34) of tRNA, leading to the formation of s(2)U34. This chain is tRNA-specific 2-thiouridylase MnmA, found in Rhodopseudomonas palustris (strain BisB18).